We begin with the raw amino-acid sequence, 318 residues long: Polyprenal reductase (318 aa).

The Cytoplasmic segment spans residues M1–W19. A helical membrane pass occupies residues L20–L40. Residues P41–Y80 are Lumenal-facing. Residues I81–G101 traverse the membrane as a helical segment. Topologically, residues V102 to Q119 are cytoplasmic. Residues F120–S140 form a helical membrane-spanning segment. Residues L141 to T156 lie on the Lumenal side of the membrane. Residues V157–V177 form a helical membrane-spanning segment. The Cytoplasmic segment spans residues L178–N194. A helical transmembrane segment spans residues L195–V215. At H216–S265 the chain is on the lumenal side. The helical transmembrane segment at M266 to F286 threads the bilayer. The Cytoplasmic segment spans residues S287 to F318.

Belongs to the steroid 5-alpha reductase family. Polyprenal reductase subfamily.

The protein localises to the endoplasmic reticulum membrane. It catalyses the reaction a di-trans,poly-cis-dolichal + NADP(+) = a di-trans,poly-cis-polyprenal + NADPH + H(+). The catalysed reaction is a 3-oxo-5alpha-steroid + NADP(+) = a 3-oxo-Delta(4)-steroid + NADPH + H(+). The enzyme catalyses androst-4-ene-3,17-dione + NADPH + H(+) = 5alpha-androstan-3,17-dione + NADP(+). It carries out the reaction 17beta-hydroxy-5alpha-androstan-3-one + NADP(+) = testosterone + NADPH + H(+). It participates in protein modification; protein glycosylation. Its function is as follows. Plays a key role in early steps of protein N-linked glycosylation by being involved in the conversion of polyprenol into dolichol. Acts as a polyprenal reductase that mediates the reduction of polyprenal into dolichal in a NADP-dependent mechanism. Dolichols are required for the synthesis of dolichol-linked monosaccharides and the oligosaccharide precursor used for N-glycosylation. Also able to convert testosterone (T) into 5-alpha-dihydrotestosterone (DHT). The protein is Polyprenal reductase (SRD5A3) of Ailuropoda melanoleuca (Giant panda).